Consider the following 35-residue polypeptide: Toxin Ado1 (35 aa).

3 disulfides stabilise this stretch: Cys-5-Cys-20, Cys-12-Cys-25, and Cys-19-Cys-32.

Its subcellular location is the secreted. In terms of biological role, binds reversibly and blocks P/Q-type voltage-gated calcium channels (Cav). The sequence is that of Toxin Ado1 from Agriosphodrus dohrni (Japanese assassin-bug).